We begin with the raw amino-acid sequence, 156 residues long: Small ribosomal subunit protein uS7 (156 aa).

Belongs to the universal ribosomal protein uS7 family. Part of the 30S ribosomal subunit. Contacts proteins S9 and S11.

One of the primary rRNA binding proteins, it binds directly to 16S rRNA where it nucleates assembly of the head domain of the 30S subunit. Is located at the subunit interface close to the decoding center, probably blocks exit of the E-site tRNA. The sequence is that of Small ribosomal subunit protein uS7 from Polynucleobacter necessarius subsp. necessarius (strain STIR1).